The following is a 206-amino-acid chain: Large ribosomal subunit protein uL4 (206 aa).

The tract at residues 46-77 (GTRAQKDREQVRHSTKKPFKQKGTGRARAGMT) is disordered. Residues 58–70 (HSTKKPFKQKGTG) show a composition bias toward basic residues.

It belongs to the universal ribosomal protein uL4 family. Part of the 50S ribosomal subunit.

Its function is as follows. One of the primary rRNA binding proteins, this protein initially binds near the 5'-end of the 23S rRNA. It is important during the early stages of 50S assembly. It makes multiple contacts with different domains of the 23S rRNA in the assembled 50S subunit and ribosome. Functionally, forms part of the polypeptide exit tunnel. The sequence is that of Large ribosomal subunit protein uL4 from Polaromonas naphthalenivorans (strain CJ2).